The sequence spans 111 residues: Nucleoid-associated protein NMA1657 (111 aa).

The protein belongs to the YbaB/EbfC family. Homodimer.

It localises to the cytoplasm. Its subcellular location is the nucleoid. Binds to DNA and alters its conformation. May be involved in regulation of gene expression, nucleoid organization and DNA protection. This Neisseria meningitidis serogroup A / serotype 4A (strain DSM 15465 / Z2491) protein is Nucleoid-associated protein NMA1657.